Consider the following 732-residue polypeptide: Catalase-peroxidase (732 aa).

The disordered stretch occupies residues 1–20; the sequence is MDKDSKRPVVGSTVRGGMSN. Residues 92–220 constitute a cross-link (tryptophyl-tyrosyl-methioninium (Trp-Tyr) (with M-246)); that stretch reads WHSAGTYRMG…LAAVQMGLIY (129 aa). Catalysis depends on H93, which acts as the Proton acceptor. The tryptophyl-tyrosyl-methioninium (Tyr-Met) (with W-92) cross-link spans 220–246; the sequence is YVNPEGPDGNPDPVAAGYDVIETFARM. Residue H261 participates in heme b binding.

This sequence belongs to the peroxidase family. Peroxidase/catalase subfamily. As to quaternary structure, homodimer or homotetramer. Requires heme b as cofactor. In terms of processing, formation of the three residue Trp-Tyr-Met cross-link is important for the catalase, but not the peroxidase activity of the enzyme.

It carries out the reaction H2O2 + AH2 = A + 2 H2O. The enzyme catalyses 2 H2O2 = O2 + 2 H2O. In terms of biological role, bifunctional enzyme with both catalase and broad-spectrum peroxidase activity. This is Catalase-peroxidase from Desulfosudis oleivorans (strain DSM 6200 / JCM 39069 / Hxd3) (Desulfococcus oleovorans).